Consider the following 497-residue polypeptide: MGGYILAIDQGTTSTRAIVFDGKQQVAGVGQKEFKQYFPKSGWVEHDPEEIWETVLFTARQAIEKAGISATDIAAIGITNQRETVVVWDRATGKPIHNAIVWQDRRTASFCDKLKKQGLEKTFSKKTGLLLDPYFSGTKLNWLLTNVKGAPARAAKGELCFGTVDTFLIWRLTGGKSFVTDATNASRTLIYNIVDNSWDDELTDILRIPRVMLPEVKDCAADFGVTDASLFGAAIPILGVAGDQQAATIGQACFKPGMLKSTYGTGCFALLNTGKDIVRSKNRLLTTIAYRLNGETTYALEGSIFVAGAAVQWLRDGLKVIKAAPDTGTLAESADPTQDVYLVPAFTGLGAPHWDPDARGAIYGMTRNTGPAEFARAALESVCYQTRDLLDAMHRDWRSNGKDTVLRVDGGMVASDWTMQRLSDLLDAPVDRPVILETTALGVAWLAGSRAGVWPKQEEFAKSWARDRRFEPKMDGTTRKGKLKGWRSAVKRTLMAA.

Threonine 12 contributes to the ADP binding site. ATP is bound by residues threonine 12, threonine 13, and serine 14. Threonine 12 is a sn-glycerol 3-phosphate binding site. Arginine 16 is a binding site for ADP. Arginine 82, glutamate 83, tyrosine 134, and aspartate 243 together coordinate sn-glycerol 3-phosphate. Residues arginine 82, glutamate 83, tyrosine 134, aspartate 243, and glutamine 244 each contribute to the glycerol site. 2 residues coordinate ADP: threonine 265 and glycine 308. Residues threonine 265, glycine 308, glutamine 312, and glycine 411 each coordinate ATP. An ADP-binding site is contributed by glycine 411.

Belongs to the FGGY kinase family.

It catalyses the reaction glycerol + ATP = sn-glycerol 3-phosphate + ADP + H(+). Its pathway is polyol metabolism; glycerol degradation via glycerol kinase pathway; sn-glycerol 3-phosphate from glycerol: step 1/1. Inhibited by fructose 1,6-bisphosphate (FBP). Its function is as follows. Key enzyme in the regulation of glycerol uptake and metabolism. Catalyzes the phosphorylation of glycerol to yield sn-glycerol 3-phosphate. The sequence is that of Glycerol kinase from Sinorhizobium fredii (strain NBRC 101917 / NGR234).